A 644-amino-acid chain; its full sequence is Protein DA1-related 6 (644 aa).

UIM domains lie at Glu-119–Arg-138, Asp-181–Gly-200, and Asp-244–Ile-263. The 72-residue stretch at Ser-284–Thr-355 folds into the LIM zinc-binding domain. Residues Ala-572 to Ser-589 are compositionally biased toward low complexity. The segment at Ala-572 to Lys-591 is disordered.

Interacts with ubiquitin.

In terms of biological role, ubiquitin receptor that probably regulates developmental process. This Arabidopsis thaliana (Mouse-ear cress) protein is Protein DA1-related 6 (DAR6).